A 305-amino-acid chain; its full sequence is Tyrosine recombinase XerC (305 aa).

One can recognise a Core-binding (CB) domain in the interval 4–95; it reads TSIQALINKW…AVKNFYRFLE (92 aa). The Tyr recombinase domain maps to 116–298; the sequence is LLPKALSEDD…SIKHLEAVYT (183 aa). Active-site residues include Arg159, Lys182, His250, Arg253, and His276. The active-site O-(3'-phospho-DNA)-tyrosine intermediate is the Tyr285.

The protein belongs to the 'phage' integrase family. XerC subfamily. Forms a cyclic heterotetrameric complex composed of two molecules of XerC and two molecules of XerD.

It localises to the cytoplasm. In terms of biological role, site-specific tyrosine recombinase, which acts by catalyzing the cutting and rejoining of the recombining DNA molecules. The XerC-XerD complex is essential to convert dimers of the bacterial chromosome into monomers to permit their segregation at cell division. It also contributes to the segregational stability of plasmids. The protein is Tyrosine recombinase XerC of Rickettsia africae (strain ESF-5).